A 284-amino-acid polypeptide reads, in one-letter code: RNase adapter protein RapZ (284 aa).

8–15 (GRSGSGKS) is an ATP binding site. 56-59 (DVRN) is a GTP binding site. The interval 266 to 284 (RSRGKNVQSRHRTLEKRKT) is RNA-binding.

Belongs to the RapZ-like family. RapZ subfamily. Homotrimer.

Modulates the synthesis of GlmS, by affecting the processing and stability of the regulatory small RNA GlmZ. When glucosamine-6-phosphate (GlcN6P) concentrations are high in the cell, RapZ binds GlmZ and targets it to cleavage by RNase E. Consequently, GlmZ is inactivated and unable to activate GlmS synthesis. Under low GlcN6P concentrations, RapZ is sequestered and inactivated by an other regulatory small RNA, GlmY, preventing GlmZ degradation and leading to synthesis of GlmS. This Escherichia fergusonii (strain ATCC 35469 / DSM 13698 / CCUG 18766 / IAM 14443 / JCM 21226 / LMG 7866 / NBRC 102419 / NCTC 12128 / CDC 0568-73) protein is RNase adapter protein RapZ.